Consider the following 177-residue polypeptide: SPbeta prophage-derived uncharacterized protein YopI (177 aa).

The helical transmembrane segment at 11-31 threads the bilayer; that stretch reads FEGIIGALLGVIVTLILTHIL.

Its subcellular location is the cell membrane. The protein is SPbeta prophage-derived uncharacterized protein YopI (yopI) of Bacillus subtilis (strain 168).